A 102-amino-acid chain; its full sequence is UPF0251 protein ASA_1331 (102 aa).

The protein belongs to the UPF0251 family.

The polypeptide is UPF0251 protein ASA_1331 (Aeromonas salmonicida (strain A449)).